Here is a 493-residue protein sequence, read N- to C-terminus: Aspartyl/glutamyl-tRNA(Asn/Gln) amidotransferase subunit B (493 aa).

The interval 268–291 is disordered; the sequence is HYQEADGSTSKGRPKETAEDYRYF. The span at 280 to 291 shows a compositional bias: basic and acidic residues; it reads RPKETAEDYRYF.

It belongs to the GatB/GatE family. GatB subfamily. Heterotrimer of A, B and C subunits.

The catalysed reaction is L-glutamyl-tRNA(Gln) + L-glutamine + ATP + H2O = L-glutaminyl-tRNA(Gln) + L-glutamate + ADP + phosphate + H(+). It catalyses the reaction L-aspartyl-tRNA(Asn) + L-glutamine + ATP + H2O = L-asparaginyl-tRNA(Asn) + L-glutamate + ADP + phosphate + 2 H(+). Allows the formation of correctly charged Asn-tRNA(Asn) or Gln-tRNA(Gln) through the transamidation of misacylated Asp-tRNA(Asn) or Glu-tRNA(Gln) in organisms which lack either or both of asparaginyl-tRNA or glutaminyl-tRNA synthetases. The reaction takes place in the presence of glutamine and ATP through an activated phospho-Asp-tRNA(Asn) or phospho-Glu-tRNA(Gln). The polypeptide is Aspartyl/glutamyl-tRNA(Asn/Gln) amidotransferase subunit B (Corynebacterium glutamicum (strain ATCC 13032 / DSM 20300 / JCM 1318 / BCRC 11384 / CCUG 27702 / LMG 3730 / NBRC 12168 / NCIMB 10025 / NRRL B-2784 / 534)).